The following is a 366-amino-acid chain: Uroporphyrinogen decarboxylase (366 aa).

Residues 28–32 (RQAGR), Asp78, Tyr160, Thr215, and His333 contribute to the substrate site.

It belongs to the uroporphyrinogen decarboxylase family. In terms of assembly, homodimer.

It localises to the cytoplasm. It catalyses the reaction uroporphyrinogen III + 4 H(+) = coproporphyrinogen III + 4 CO2. Its pathway is porphyrin-containing compound metabolism; protoporphyrin-IX biosynthesis; coproporphyrinogen-III from 5-aminolevulinate: step 4/4. Its function is as follows. Catalyzes the decarboxylation of four acetate groups of uroporphyrinogen-III to yield coproporphyrinogen-III. This chain is Uroporphyrinogen decarboxylase, found in Paraburkholderia xenovorans (strain LB400).